The sequence spans 127 residues: Ribonuclease P protein component (127 aa).

It belongs to the RnpA family. As to quaternary structure, consists of a catalytic RNA component (M1 or rnpB) and a protein subunit.

The enzyme catalyses Endonucleolytic cleavage of RNA, removing 5'-extranucleotides from tRNA precursor.. Functionally, RNaseP catalyzes the removal of the 5'-leader sequence from pre-tRNA to produce the mature 5'-terminus. It can also cleave other RNA substrates such as 4.5S RNA. The protein component plays an auxiliary but essential role in vivo by binding to the 5'-leader sequence and broadening the substrate specificity of the ribozyme. The sequence is that of Ribonuclease P protein component from Prochlorococcus marinus (strain SARG / CCMP1375 / SS120).